A 133-amino-acid chain; its full sequence is Sec-independent protein translocase protein TatB (133 aa).

A helical membrane pass occupies residues 1 to 21; it reads MFDIGFWELVLIAIVALVVLG. A disordered region spans residues 67 to 133; it reads EQMGMQNLSP…ASQPAEKKAE (67 aa). Residues 70–84 show a composition bias toward polar residues; the sequence is GMQNLSPELQKSVES. Residues 97–116 are compositionally biased toward low complexity; the sequence is AATPSSEASSTSSNPSSATE.

It belongs to the TatB family. The Tat system comprises two distinct complexes: a TatABC complex, containing multiple copies of TatA, TatB and TatC subunits, and a separate TatA complex, containing only TatA subunits. Substrates initially bind to the TatABC complex, which probably triggers association of the separate TatA complex to form the active translocon.

The protein resides in the cell inner membrane. Its function is as follows. Part of the twin-arginine translocation (Tat) system that transports large folded proteins containing a characteristic twin-arginine motif in their signal peptide across membranes. Together with TatC, TatB is part of a receptor directly interacting with Tat signal peptides. TatB may form an oligomeric binding site that transiently accommodates folded Tat precursor proteins before their translocation. The sequence is that of Sec-independent protein translocase protein TatB from Vibrio cholerae serotype O1 (strain ATCC 39315 / El Tor Inaba N16961).